The sequence spans 216 residues: Ribosomal RNA small subunit methyltransferase G (216 aa).

Residues Gly81, Phe86, Ala130–Glu131, and Arg144 each bind S-adenosyl-L-methionine.

This sequence belongs to the methyltransferase superfamily. RNA methyltransferase RsmG family.

The protein localises to the cytoplasm. The catalysed reaction is guanosine(527) in 16S rRNA + S-adenosyl-L-methionine = N(7)-methylguanosine(527) in 16S rRNA + S-adenosyl-L-homocysteine. In terms of biological role, specifically methylates the N7 position of guanine in position 527 of 16S rRNA. This Rhodospirillum centenum (strain ATCC 51521 / SW) protein is Ribosomal RNA small subunit methyltransferase G.